The following is a 1008-amino-acid chain: MEIEVVLGIGEDAGPKPCSAEIESAEKTLKDDGVVQENGVRVSDNGEKKSDVVVDVDEKNEKNLNESGVIEDCVMNGVSSLLKLKEDVEEEEEEEEEEEEEEEDGEDEEEEEEEEEEEEEEEHGYCVGDFVWGKIKNHPWWPGQIYDPSDASDLALKIKQKGKLLVACFGDGTFAWCGASQLKPFAESFKECSKVSNSRSFLGAVEEAVEEIGRHIERVLVCDCAEEKKHEFDSPLVNNAGIKEGVLVRDVRREMISSLLIGKHGEILKDVKSFAETVSFSGLLELEILKRKVSAFYRSNRGYGLTEYHEPQSVPGLEDKNNDDDDDDEEKNVNDGLQWRAKRSRVEEVAALDHEESSSLQRSLEKCSGFPDHRLPHRRKEKSITEIIEKESAAKVRFETEPADGDVKSNVKSGRKKTKRHDEVNGDLENVTTTALWRRRKSEVATIEDGGNKQVVESSKGKTSRKKKKMDVDDGDDDGSGDKEESEEKEISDLEINIDSTSLASLRKKVRFDDSVVERSTENGETATQTSKRERKKSKYLSPDFLSDFSRKGRKKSTIESESSKVSSQSQVDERVTDASDSLMEVEEDTLDKPCEPSSDNGLGQEELSRELSNAVDFLRLGATPKEMQDLIRVAALGTQYPKDSSSRDMVREFMTIYRSFTYHDGANHKFLGSYDSSDKEKEELSEMGKPVTKGKEKKDKKGKAKQKAEEIEVTGKEENETDKHGKMKKERKRKKSESKKEGGEGEETQKEANESTKKERKRKKSESKKQSDGEEETQKEPSESTKKERKRKNPESKKKAEAVEEEETRKESVESTKKERKRKKPKHDEEEVPNETEKPEKKKKKKREGKSKKKETETEFSGAELYVTFGPGSSLPKKEDLIEIYEKFGALDKERTDTVDNNFSAHVAFLDVADGEKAFESSLEKCPFTSNSTVKFRLKYPNERTEEKKTEAEVAETTMEVEYLKKKLDEMKLLLDGCEGGMTEEVKVKLEGEMVNLLEKVIEMRSS.

A coiled-coil region spans residues 78–122; that stretch reads VSSLLKLKEDVEEEEEEEEEEEEEEEDGEDEEEEEEEEEEEEEEE. The segment at 84–124 is disordered; that stretch reads LKEDVEEEEEEEEEEEEEEEDGEDEEEEEEEEEEEEEEEHG. The segment covering 87–122 has biased composition (acidic residues); the sequence is DVEEEEEEEEEEEEEEEDGEDEEEEEEEEEEEEEEE. One can recognise a PWWP domain in the interval 127–188; the sequence is VGDFVWGKIK…ASQLKPFAES (62 aa). Disordered stretches follow at residues 307 to 339, 399 to 606, and 668 to 874; these read EYHE…GLQW, ETEP…LGQE, and NHKF…GPGS. Positions 321–330 are enriched in acidic residues; the sequence is NNDDDDDDEE. Residues 399–409 are compositionally biased toward basic and acidic residues; it reads ETEPADGDVKS. The segment covering 473 to 490 has biased composition (acidic residues); sequence DDGDDDGSGDKEESEEKE. Basic and acidic residues-rich tracts occupy residues 511–522, 677–687, and 707–725; these read RFDDSVVERSTE, SSDKEKEELSE, and QKAE…TDKH. A compositionally biased stretch (basic residues) spans 726 to 738; sequence GKMKKERKRKKSE. Composition is skewed to basic and acidic residues over residues 739–758, 768–787, and 794–818; these read SKKE…ESTK, SKKQ…ESTK, and NPES…ESTK. 3 consecutive short sequence motifs (nuclear localization signal) follow at residues 786 to 793, 809 to 816, and 841 to 848; these read TKKERKRK, TRKESVES, and EKKKKKKR. Positions 804-824 form a coiled coil; that stretch reads VEEEETRKESVESTKKERKRK. Positions 842–854 are enriched in basic residues; the sequence is KKKKKKREGKSKK.

This sequence belongs to the PDP family. In terms of assembly, interacts with DEK3. Binds to LHP1, MSI4/FVE and MSI5. Component of the PRC2 (polycomb repressive complex 2) complex which regulates histone methylation on histone H3K27.

The protein localises to the nucleus. In terms of biological role, together with PDP1, PDP2 and PDP6, interacts with MSI4/FVE and MSI5 to suppress FLC, MAF4 and MAF5 expression by regulating the function of the PRC2 complex and modulating H3K27me3 level, thereby promoting flowering. The chain is PWWP domain-containing protein 3 from Arabidopsis thaliana (Mouse-ear cress).